The sequence spans 353 residues: UPF0283 membrane protein YcjF (353 aa).

Residues 1-19 are compositionally biased toward basic and acidic residues; that stretch reads MSEPLKPRIDFAEPLKEEP. The interval 1–35 is disordered; the sequence is MSEPLKPRIDFAEPLKEEPTSAFKAQQTFSEAESR. Over 1-69 the chain is Periplasmic; that stretch reads MSEPLKPRID…LRPKRSLWRK (69 aa). A helical membrane pass occupies residues 70 to 90; that stretch reads MVMGGLALFGASVVGQGVQWT. Residues 91–99 lie on the Cytoplasmic side of the membrane; sequence MNAWQTQDW. The chain crosses the membrane as a helical span at residues 100 to 120; the sequence is VALGGCAAGALIVGAGVGSVV. At 121–212 the chain is on the periplasmic side; the sequence is TEWRRLWRLR…ARREISRFAA (92 aa). The helical transmembrane segment at 213–233 threads the bilayer; that stretch reads ESTLMIAVSPLALVDMAFIAW. Residues 234-353 are Cytoplasmic-facing; it reads RNLRLINRIA…LQKSKSSPEK (120 aa).

It belongs to the UPF0283 family.

The protein localises to the cell inner membrane. This is UPF0283 membrane protein YcjF (ycjF) from Salmonella typhimurium (strain LT2 / SGSC1412 / ATCC 700720).